Here is a 964-residue protein sequence, read N- to C-terminus: Integrator complex subunit 4 (964 aa).

Position 27 is an N6-acetyllysine (Lys27). 8 HEAT repeats span residues 67-106 (AESVEGVVRILLEHYYKENDPSVRLKIASLLGLLSKTAGF), 146-184 (QATQVRLVDVACKHLTDTSHGVRNKCLQLLGNLGSLEKS), 191-229 (GSAARDVQKIIGDHFSDQDPRVRTAAIKAMLQLHERGLK), 230-264 (LHQTIYNQACKLLSDDYEQVRSAAVQLIWVVSQLY), 278-314 (IRLVDDAFGKICHMVSDGSWVVRVQAAKLLGSMEQVS), 370-406 (NLIESGACGAFVHGLEDEMYEVRIAAVEALCMLAQSS), 407-445 (PSFAEKCLDFLVDMFNDEIEEVRLQSIHTMRKISNNITL), and 447-485 (EDQLDTVLAVLEDSSRDIREALHELLCCTNVSTKEGIHL). A Glycyl lysine isopeptide (Lys-Gly) (interchain with G-Cter in SUMO1); alternate cross-link involves residue Lys792. Residue Lys792 forms a Glycyl lysine isopeptide (Lys-Gly) (interchain with G-Cter in SUMO2); alternate linkage.

This sequence belongs to the Integrator subunit 4 family. Component of the Integrator complex, composed of core subunits INTS1, INTS2, INTS3, INTS4, INTS5, INTS6, INTS7, INTS8, INTS9/RC74, INTS10, INTS11/CPSF3L, INTS12, INTS13, INTS14 and INTS15. The core complex associates with protein phosphatase 2A subunits PPP2CA and PPP2R1A, to form the Integrator-PP2A (INTAC) complex. INTS4 is part of the RNA endonuclease subcomplex, composed of INTS4, INTS9, INTS11 and inositol hexakisphosphate (InsP6). Interacts with BRAT1; interaction is required for the assembly of the RNA endonuclease subcomplex.

The protein resides in the nucleus. Its subcellular location is the cytoplasm. Its function is as follows. Component of the integrator complex, a multiprotein complex that terminates RNA polymerase II (Pol II) transcription in the promoter-proximal region of genes. The integrator complex provides a quality checkpoint during transcription elongation by driving premature transcription termination of transcripts that are unfavorably configured for transcriptional elongation: the complex terminates transcription by (1) catalyzing dephosphorylation of the C-terminal domain (CTD) of Pol II subunit POLR2A/RPB1 and SUPT5H/SPT5, (2) degrading the exiting nascent RNA transcript via endonuclease activity and (3) promoting the release of Pol II from bound DNA. The integrator complex is also involved in terminating the synthesis of non-coding Pol II transcripts, such as enhancer RNAs (eRNAs), small nuclear RNAs (snRNAs), telomerase RNAs and long non-coding RNAs (lncRNAs). Within the integrator complex, INTS4 acts as an scaffold that links INTS9 and INTS11. Mediates recruitment of cytoplasmic dynein to the nuclear envelope, probably as component of the integrator complex. In Mus musculus (Mouse), this protein is Integrator complex subunit 4 (Ints4).